A 505-amino-acid polypeptide reads, in one-letter code: Cytochrome P450 52C1 (505 aa).

Residues 4–21 (LFCFLAGIIVVYKAAQYY) form a helical membrane-spanning segment. Cys453 is a heme binding site.

This sequence belongs to the cytochrome P450 family. Requires heme as cofactor.

Its subcellular location is the membrane. Together with an NADPH cytochrome P450 the enzyme system catalyzes the terminal hydroxylation as the first step in the assimilation of alkanes and fatty acids. In Candida tropicalis (Yeast), this protein is Cytochrome P450 52C1 (CYP52C1).